Here is a 246-residue protein sequence, read N- to C-terminus: Ribonuclease PH (246 aa).

Phosphate-binding positions include R91 and 129–131 (GTR).

Belongs to the RNase PH family. As to quaternary structure, homohexameric ring arranged as a trimer of dimers.

It catalyses the reaction tRNA(n+1) + phosphate = tRNA(n) + a ribonucleoside 5'-diphosphate. Its function is as follows. Phosphorolytic 3'-5' exoribonuclease that plays an important role in tRNA 3'-end maturation. Removes nucleotide residues following the 3'-CCA terminus of tRNAs; can also add nucleotides to the ends of RNA molecules by using nucleoside diphosphates as substrates, but this may not be physiologically important. Probably plays a role in initiation of 16S rRNA degradation (leading to ribosome degradation) during starvation. The polypeptide is Ribonuclease PH (Paraburkholderia xenovorans (strain LB400)).